Here is a 658-residue protein sequence, read N- to C-terminus: Cysteine-rich receptor-like protein kinase 36 (658 aa).

Positions 1 to 26 are cleaved as a signal peptide; that stretch reads MERSNLFHIPCFLLLFLLFNINGVHT. Gnk2-homologous domains follow at residues 27–128 and 139–246; these read TFVC…NIHR and NVPH…DYRF. At 27–281 the chain is on the extracellular side; sequence TFVCGDEDFS…KKGRMFQPWS (255 aa). N-linked (GlcNAc...) asparagine glycans are attached at residues asparagine 38, asparagine 64, asparagine 116, asparagine 150, and asparagine 163. The chain crosses the membrane as a helical span at residues 282–302; the sequence is VVVVVFPTGINLAVFVAFVLA. Residues 303–658 lie on the Cytoplasmic side of the membrane; that stretch reads YRRMRRRIYT…EVSITVLYPR (356 aa). The region spanning 340 to 612 is the Protein kinase domain; the sequence is FSLENKLGQG…ITWLARDGTF (273 aa). ATP contacts are provided by residues 346-354 and lysine 368; that span reads LGQGGFGSV. Tyrosine 413 bears the Phosphotyrosine mark. Residue aspartate 465 is the Proton acceptor of the active site. Phosphoserine is present on serine 469. At threonine 505 the chain carries Phosphothreonine. Tyrosine 513 carries the post-translational modification Phosphotyrosine.

Belongs to the protein kinase superfamily. Ser/Thr protein kinase family. CRK subfamily. In terms of assembly, interacts with CRK45. Post-translationally, autophosphorylated.

It is found in the cell membrane. The enzyme catalyses L-seryl-[protein] + ATP = O-phospho-L-seryl-[protein] + ADP + H(+). It carries out the reaction L-threonyl-[protein] + ATP = O-phospho-L-threonyl-[protein] + ADP + H(+). Forms a complex with CRK45 that may negatively control abscisic acid (ABA) and osmotic stress signal transduction. Can phosphorylate CRK45 in vitro. The protein is Cysteine-rich receptor-like protein kinase 36 of Arabidopsis thaliana (Mouse-ear cress).